A 193-amino-acid polypeptide reads, in one-letter code: Putative manganese efflux pump MntP (193 aa).

Helical transmembrane passes span 3 to 23 (LATL…AALG), 39 to 59 (VGAY…ALGL), 65 to 85 (IAAF…GHMV), 113 to 133 (LALA…GLAV), 138 to 158 (ILMA…GGVL), and 173 to 193 (VLGG…HLSA).

Belongs to the MntP (TC 9.B.29) family.

The protein resides in the cell inner membrane. Probably functions as a manganese efflux pump. This is Putative manganese efflux pump MntP from Rhodospirillum rubrum (strain ATCC 11170 / ATH 1.1.1 / DSM 467 / LMG 4362 / NCIMB 8255 / S1).